The sequence spans 419 residues: Histidine--tRNA ligase (419 aa).

The protein belongs to the class-II aminoacyl-tRNA synthetase family. In terms of assembly, homodimer.

Its subcellular location is the cytoplasm. The catalysed reaction is tRNA(His) + L-histidine + ATP = L-histidyl-tRNA(His) + AMP + diphosphate + H(+). The chain is Histidine--tRNA ligase from Thermosipho melanesiensis (strain DSM 12029 / CIP 104789 / BI429).